The sequence spans 152 residues: Small ribosomal subunit protein uS15 (152 aa).

Residues 1–10 show a composition bias toward basic residues; the sequence is MAKMHTRTKG. Residues 1 to 26 form a disordered region; that stretch reads MAKMHTRTKGKSGSTKPIRSESPAWS. A compositionally biased stretch (polar residues) spans 11 to 26; it reads KSGSTKPIRSESPAWS.

Belongs to the universal ribosomal protein uS15 family. Part of the 30S ribosomal subunit.

The chain is Small ribosomal subunit protein uS15 from Methanococcoides burtonii (strain DSM 6242 / NBRC 107633 / OCM 468 / ACE-M).